A 222-amino-acid chain; its full sequence is MIF4G domain-containing protein (222 aa).

Positions glutamate 3–glycine 205 constitute an MIF4G domain.

Belongs to the MIF4GD family. As to quaternary structure, interacts with EIF4G1, EIF4G2 and SLBP; probably tethered by SLBP to the 3'-end of mRNAs ending with the histone stem-loop, it also interacts with EIF4G1 which is bound to their 5'-end.

It localises to the cytoplasm. Its subcellular location is the nucleus. Functionally, functions in replication-dependent translation of histone mRNAs which differ from other eukaryotic mRNAs in that they do not end with a poly-A tail but a stem-loop. May participate in circularizing those mRNAs specifically enhancing their translation. The chain is MIF4G domain-containing protein (Mif4gd) from Rattus norvegicus (Rat).